The following is a 337-amino-acid chain: MVREEVAGSTQTLQWKCVESRVDSKRLYYGRFILSPLRKGQADTVGIALRRALLGETEGTCITHAKFGSVPHEYSTIAGIEESVQEILLNLKEIVLRSNLYGVRTASICVKGPRYITAQDIILPPSVEIVDTAQPIANLTEPTDFRIELRIKRDRGYHTEVRKNTQDGSYPIDAVSMPVRNVNYSIFACGNGNAKYEILFLEIWTNGSLTPKEALYEASRNLIDLFLPFLHTEEEGTRFQENKNRFTSPLLSFQKRLTNLKKNKKRIPLNCIFIDQLELPSRTYNCLKRANIHTLLDLLSKTEEDLMRIDSFRMQDGKQIWDTLEKHLPMDLPKNKF.

The interval 1 to 233 is alpha N-terminal domain (alpha-NTD); it reads MVREEVAGST…DLFLPFLHTE (233 aa). Residues 267–337 are alpha C-terminal domain (alpha-CTD); that stretch reads IPLNCIFIDQ…LPMDLPKNKF (71 aa).

It belongs to the RNA polymerase alpha chain family. In terms of assembly, in plastids the minimal PEP RNA polymerase catalytic core is composed of four subunits: alpha, beta, beta', and beta''. When a (nuclear-encoded) sigma factor is associated with the core the holoenzyme is formed, which can initiate transcription.

It is found in the plastid. The protein resides in the chloroplast. The enzyme catalyses RNA(n) + a ribonucleoside 5'-triphosphate = RNA(n+1) + diphosphate. In terms of biological role, DNA-dependent RNA polymerase catalyzes the transcription of DNA into RNA using the four ribonucleoside triphosphates as substrates. The sequence is that of DNA-directed RNA polymerase subunit alpha from Oryza nivara (Indian wild rice).